The sequence spans 392 residues: Nicotinate phosphoribosyltransferase (392 aa).

His216 carries the phosphohistidine; by autocatalysis modification.

This sequence belongs to the NAPRTase family. In terms of processing, transiently phosphorylated on a His residue during the reaction cycle. Phosphorylation strongly increases the affinity for substrates and increases the rate of nicotinate D-ribonucleotide production. Dephosphorylation regenerates the low-affinity form of the enzyme, leading to product release.

The catalysed reaction is nicotinate + 5-phospho-alpha-D-ribose 1-diphosphate + ATP + H2O = nicotinate beta-D-ribonucleotide + ADP + phosphate + diphosphate. The protein operates within cofactor biosynthesis; NAD(+) biosynthesis; nicotinate D-ribonucleotide from nicotinate: step 1/1. In terms of biological role, catalyzes the synthesis of beta-nicotinate D-ribonucleotide from nicotinate and 5-phospho-D-ribose 1-phosphate at the expense of ATP. This Cupriavidus necator (strain ATCC 17699 / DSM 428 / KCTC 22496 / NCIMB 10442 / H16 / Stanier 337) (Ralstonia eutropha) protein is Nicotinate phosphoribosyltransferase.